The following is a 316-amino-acid chain: 4-hydroxy-3-methylbut-2-enyl diphosphate reductase (316 aa).

Cysteine 12 contributes to the [4Fe-4S] cluster binding site. (2E)-4-hydroxy-3-methylbut-2-enyl diphosphate contacts are provided by histidine 41 and histidine 74. Positions 41 and 74 each coordinate dimethylallyl diphosphate. Isopentenyl diphosphate is bound by residues histidine 41 and histidine 74. Cysteine 96 serves as a coordination point for [4Fe-4S] cluster. (2E)-4-hydroxy-3-methylbut-2-enyl diphosphate is bound at residue histidine 124. Histidine 124 lines the dimethylallyl diphosphate pocket. Residue histidine 124 participates in isopentenyl diphosphate binding. Glutamate 126 (proton donor) is an active-site residue. Threonine 167 provides a ligand contact to (2E)-4-hydroxy-3-methylbut-2-enyl diphosphate. Cysteine 197 lines the [4Fe-4S] cluster pocket. Residues serine 225, serine 226, asparagine 227, and serine 269 each coordinate (2E)-4-hydroxy-3-methylbut-2-enyl diphosphate. The dimethylallyl diphosphate site is built by serine 225, serine 226, asparagine 227, and serine 269. Residues serine 225, serine 226, asparagine 227, and serine 269 each contribute to the isopentenyl diphosphate site.

It belongs to the IspH family. In terms of assembly, homodimer. [4Fe-4S] cluster serves as cofactor.

The enzyme catalyses isopentenyl diphosphate + 2 oxidized [2Fe-2S]-[ferredoxin] + H2O = (2E)-4-hydroxy-3-methylbut-2-enyl diphosphate + 2 reduced [2Fe-2S]-[ferredoxin] + 2 H(+). It catalyses the reaction dimethylallyl diphosphate + 2 oxidized [2Fe-2S]-[ferredoxin] + H2O = (2E)-4-hydroxy-3-methylbut-2-enyl diphosphate + 2 reduced [2Fe-2S]-[ferredoxin] + 2 H(+). It functions in the pathway isoprenoid biosynthesis; dimethylallyl diphosphate biosynthesis; dimethylallyl diphosphate from (2E)-4-hydroxy-3-methylbutenyl diphosphate: step 1/1. It participates in isoprenoid biosynthesis; isopentenyl diphosphate biosynthesis via DXP pathway; isopentenyl diphosphate from 1-deoxy-D-xylulose 5-phosphate: step 6/6. In terms of biological role, catalyzes the conversion of 1-hydroxy-2-methyl-2-(E)-butenyl 4-diphosphate (HMBPP) into a mixture of isopentenyl diphosphate (IPP) and dimethylallyl diphosphate (DMAPP). Acts in the terminal step of the DOXP/MEP pathway for isoprenoid precursor biosynthesis. This Escherichia coli (strain UTI89 / UPEC) protein is 4-hydroxy-3-methylbut-2-enyl diphosphate reductase.